Here is a 389-residue protein sequence, read N- to C-terminus: Cytochrome b (389 aa).

The next 4 membrane-spanning stretches (helical) occupy residues 36 to 56 (MGSL…FLAM), 80 to 102 (WLIR…THIA), 117 to 137 (VWTV…LGYC), and 183 to 203 (FFAF…MHMM). Residues H86 and H100 each coordinate heme b. The heme b site is built by H187 and H201. H206 contributes to the a ubiquinone binding site. 4 helical membrane passes run 229–249 (FVFK…LFVF), 293–313 (LLGV…PITD), 325–345 (LSKF…IIGM), and 352–372 (FVLI…IIVP).

Belongs to the cytochrome b family. Fungal cytochrome b-c1 complex contains 10 subunits; 3 respiratory subunits, 2 core proteins and 5 low-molecular weight proteins. Cytochrome b-c1 complex is a homodimer. Heme b serves as cofactor.

The protein localises to the mitochondrion inner membrane. Its function is as follows. Component of the ubiquinol-cytochrome c reductase complex (complex III or cytochrome b-c1 complex) that is part of the mitochondrial respiratory chain. The b-c1 complex mediates electron transfer from ubiquinol to cytochrome c. Contributes to the generation of a proton gradient across the mitochondrial membrane that is then used for ATP synthesis. The chain is Cytochrome b (COB) from Vanderwaltozyma polyspora (strain ATCC 22028 / DSM 70294 / BCRC 21397 / CBS 2163 / NBRC 10782 / NRRL Y-8283 / UCD 57-17) (Kluyveromyces polysporus).